Consider the following 223-residue polypeptide: Ribose-5-phosphate isomerase A (223 aa).

Substrate contacts are provided by residues T32–T35, D83–D86, and K96–G99. The active-site Proton acceptor is the E105. Substrate is bound at residue K123.

It belongs to the ribose 5-phosphate isomerase family. Homodimer.

The enzyme catalyses aldehydo-D-ribose 5-phosphate = D-ribulose 5-phosphate. The protein operates within carbohydrate degradation; pentose phosphate pathway; D-ribose 5-phosphate from D-ribulose 5-phosphate (non-oxidative stage): step 1/1. Its function is as follows. Catalyzes the reversible conversion of ribose-5-phosphate to ribulose 5-phosphate. The polypeptide is Ribose-5-phosphate isomerase A (Acinetobacter baumannii (strain ATCC 17978 / DSM 105126 / CIP 53.77 / LMG 1025 / NCDC KC755 / 5377)).